The following is a 195-amino-acid chain: Small ribosomal subunit protein uS4 (195 aa).

In terms of domain architecture, S4 RNA-binding spans 88 to 150; sequence RRLENVVYRL…SKNVELIKLA (63 aa).

It belongs to the universal ribosomal protein uS4 family. Part of the 30S ribosomal subunit. Contacts protein S5. The interaction surface between S4 and S5 is involved in control of translational fidelity.

In terms of biological role, one of the primary rRNA binding proteins, it binds directly to 16S rRNA where it nucleates assembly of the body of the 30S subunit. Its function is as follows. With S5 and S12 plays an important role in translational accuracy. This chain is Small ribosomal subunit protein uS4, found in Fusobacterium nucleatum subsp. nucleatum (strain ATCC 25586 / DSM 15643 / BCRC 10681 / CIP 101130 / JCM 8532 / KCTC 2640 / LMG 13131 / VPI 4355).